Reading from the N-terminus, the 157-residue chain is Small ribosomal subunit protein uS7 (157 aa).

This sequence belongs to the universal ribosomal protein uS7 family. In terms of assembly, part of the 30S ribosomal subunit. Contacts proteins S9 and S11.

Its function is as follows. One of the primary rRNA binding proteins, it binds directly to 16S rRNA where it nucleates assembly of the head domain of the 30S subunit. Is located at the subunit interface close to the decoding center, probably blocks exit of the E-site tRNA. In Chlamydia muridarum (strain MoPn / Nigg), this protein is Small ribosomal subunit protein uS7.